Consider the following 213-residue polypeptide: Protein-L-isoaspartate O-methyltransferase (213 aa).

S62 is a catalytic residue.

Belongs to the methyltransferase superfamily. L-isoaspartyl/D-aspartyl protein methyltransferase family.

Its subcellular location is the cytoplasm. It carries out the reaction [protein]-L-isoaspartate + S-adenosyl-L-methionine = [protein]-L-isoaspartate alpha-methyl ester + S-adenosyl-L-homocysteine. Catalyzes the methyl esterification of L-isoaspartyl residues in peptides and proteins that result from spontaneous decomposition of normal L-aspartyl and L-asparaginyl residues. It plays a role in the repair and/or degradation of damaged proteins. The polypeptide is Protein-L-isoaspartate O-methyltransferase (Desulfovibrio desulfuricans (strain ATCC 27774 / DSM 6949 / MB)).